The chain runs to 216 residues: Redox-sensing transcriptional repressor Rex (216 aa).

The H-T-H motif DNA-binding region spans 20–59 (QYYRLFKSLVEENVTRTNSQLISEKIGVDAATIRRDFSLF). Residue 94 to 99 (GVGNLG) coordinates NAD(+).

It belongs to the transcriptional regulatory Rex family. Homodimer.

It localises to the cytoplasm. Its function is as follows. Modulates transcription in response to changes in cellular NADH/NAD(+) redox state. This chain is Redox-sensing transcriptional repressor Rex, found in Lactococcus lactis subsp. cremoris (Streptococcus cremoris).